Reading from the N-terminus, the 96-residue chain is Co-chaperonin GroES (96 aa).

The protein belongs to the GroES chaperonin family. In terms of assembly, heptamer of 7 subunits arranged in a ring. Interacts with the chaperonin GroEL.

It localises to the cytoplasm. Its function is as follows. Together with the chaperonin GroEL, plays an essential role in assisting protein folding. The GroEL-GroES system forms a nano-cage that allows encapsulation of the non-native substrate proteins and provides a physical environment optimized to promote and accelerate protein folding. GroES binds to the apical surface of the GroEL ring, thereby capping the opening of the GroEL channel. This is Co-chaperonin GroES from Citrifermentans bemidjiense (strain ATCC BAA-1014 / DSM 16622 / JCM 12645 / Bem) (Geobacter bemidjiensis).